The chain runs to 439 residues: Ribulose bisphosphate carboxylase/oxygenase activase, chloroplastic (439 aa).

Residue 167 to 174 (GGKGQGKS) coordinates ATP.

Belongs to the RuBisCO activase family.

Its subcellular location is the plastid. The protein resides in the chloroplast stroma. Activation of RuBisCO (ribulose-1,5-bisphosphate carboxylase/oxygenase; EC 4.1.1.39) involves the ATP-dependent carboxylation of the epsilon-amino group of lysine leading to a carbamate structure. The sequence is that of Ribulose bisphosphate carboxylase/oxygenase activase, chloroplastic (RCA) from Vigna radiata var. radiata (Mung bean).